Here is a 518-residue protein sequence, read N- to C-terminus: G1/S-specific cyclin-E (518 aa).

Residues 1–193 form a disordered region; the sequence is MAGRKSSRTT…DEETEDEFDL (193 aa). Positions 13–46 are enriched in basic and acidic residues; the sequence is PVKKAERKSAILSPHDELRERLLETSLDVKENIP. The span at 47 to 62 shows a compositional bias: polar residues; the sequence is ERSSSTRNESVGSQRS. Over residues 82–107 the composition is skewed to basic and acidic residues; that stretch reads PSTEKKGNGSRDDSFSSVFSEDRETE. The segment covering 108–119 has biased composition (low complexity); the sequence is SSVGSTSSRTRG. Positions 135 to 154 are enriched in basic and acidic residues; the sequence is SSDHNAESEESRETPQSDEH. Residues 155-192 are compositionally biased toward acidic residues; sequence DGFEEDGDVEDDVSSDVNDEEDEYDEYEEDEETEDEFD.

Belongs to the cyclin family. Cyclin E subfamily. Interacts with a member of the CDK2/CDK protein kinases to form a serine/threonine kinase holoenzyme complex. The cyclin subunit imparts substrate specificity to the complex.

The protein resides in the nucleus. The protein localises to the cytoplasm. It is found in the cytoskeleton. It localises to the microtubule organizing center. Its subcellular location is the centrosome. The protein resides in the centriole. In terms of biological role, essential for the control of the cell cycle at the G1/S (start) transition. In association with cdk-2, regulates proliferation, quiescent state and cell fate during the development of several cell lineages. In the embryo, initiates the establishment of cell polarity through the recruitment of the centrosomal proteins spd-2 and spd-5 during prophase. During the development of the vulva, controls the onset of vulval cell terminal differentiation by controlling the duration of G1 phase. During hypoderm development at early larval stages, controls syncytial fate of seam cell daughter cells. Involved in the progression of cell division in the intestinal lineage in larvae, and in particular in endoreplication, a specific growth pathway in the intestinal epithelium, required for feeding and gut development in growing larvae. By controlling the activity of translational repressor gld-1, regulates the pool of germline stem cells and the size of the mitotic zone by preventing entry into meiosis. In addition, repression of expression by gld-1 prevents mitosis re-entry in meiotic germline cells. This is G1/S-specific cyclin-E (cye-1) from Caenorhabditis briggsae.